Here is a 40-residue protein sequence, read N- to C-terminus: Alpha-conotoxin-like Lp1.6b (40 aa).

A propeptide spanning residues 1–23 (VVLGPASDGRNAAANNKASDLIR) is cleaved from the precursor. Position 24 is a pyrrolidone carboxylic acid (Q24). 2 cysteine pairs are disulfide-bonded: C26–C32 and C27–C39.

It belongs to the conotoxin A superfamily. As to expression, expressed by the venom duct.

The protein resides in the secreted. Functionally, alpha-conotoxins act on postsynaptic membranes, they bind to the nicotinic acetylcholine receptors (nAChR) and thus inhibit them. The polypeptide is Alpha-conotoxin-like Lp1.6b (Conus leopardus (Leopard cone)).